The sequence spans 85 residues: Neutrophil elastase 2A (85 aa).

Residues 1–85 (IVGGRAAEPH…VAQGVFSFVR (85 aa)) form the Peptidase S1 domain. The Charge relay system role is filled by Ser67.

The protein belongs to the peptidase S1 family. Elastase subfamily.

In terms of biological role, may be involved in the degradation of connective tissue in chronic lung disease. The protein is Neutrophil elastase 2A of Equus caballus (Horse).